The sequence spans 178 residues: MSSTKDELQLYAKAIYNCAISNHQSLDHWKTMLQLMANILNNEIIKNLISKAYFSQHVISLFIDLCCNKVNQYGINLIKILAENKRLMLLEKLYKEFINLCELYQGVVNITVISAHKLNEEYISKINIMLKKRFFKKINVTYVIDESIIGGLIIKFCDTVINASIHSRLEKLLNILQY.

This sequence belongs to the ATPase delta chain family. As to quaternary structure, F-type ATPases have 2 components, F(1) - the catalytic core - and F(0) - the membrane proton channel. F(1) has five subunits: alpha(3), beta(3), gamma(1), delta(1), epsilon(1). F(0) has three main subunits: a(1), b(2) and c(10-14). The alpha and beta chains form an alternating ring which encloses part of the gamma chain. F(1) is attached to F(0) by a central stalk formed by the gamma and epsilon chains, while a peripheral stalk is formed by the delta and b chains.

It localises to the cell membrane. F(1)F(0) ATP synthase produces ATP from ADP in the presence of a proton or sodium gradient. F-type ATPases consist of two structural domains, F(1) containing the extramembraneous catalytic core and F(0) containing the membrane proton channel, linked together by a central stalk and a peripheral stalk. During catalysis, ATP synthesis in the catalytic domain of F(1) is coupled via a rotary mechanism of the central stalk subunits to proton translocation. In terms of biological role, this protein is part of the stalk that links CF(0) to CF(1). It either transmits conformational changes from CF(0) to CF(1) or is implicated in proton conduction. This chain is ATP synthase subunit delta, found in Buchnera aphidicola subsp. Baizongia pistaciae (strain Bp).